The following is a 1462-amino-acid chain: DNA polymerase III PolC-type (1462 aa).

Positions 424–580 (YVVFDVETTG…YDAEATGRLL (157 aa)) constitute an Exonuclease domain.

This sequence belongs to the DNA polymerase type-C family. PolC subfamily.

It localises to the cytoplasm. The enzyme catalyses DNA(n) + a 2'-deoxyribonucleoside 5'-triphosphate = DNA(n+1) + diphosphate. Required for replicative DNA synthesis. This DNA polymerase also exhibits 3' to 5' exonuclease activity. The sequence is that of DNA polymerase III PolC-type from Streptococcus sanguinis (strain SK36).